Here is a 247-residue protein sequence, read N- to C-terminus: 5-oxoprolinase subunit A 1 (247 aa).

Belongs to the LamB/PxpA family. Forms a complex composed of PxpA, PxpB and PxpC.

The catalysed reaction is 5-oxo-L-proline + ATP + 2 H2O = L-glutamate + ADP + phosphate + H(+). Functionally, catalyzes the cleavage of 5-oxoproline to form L-glutamate coupled to the hydrolysis of ATP to ADP and inorganic phosphate. This chain is 5-oxoprolinase subunit A 1, found in Ralstonia nicotianae (strain ATCC BAA-1114 / GMI1000) (Ralstonia solanacearum).